Here is a 192-residue protein sequence, read N- to C-terminus: Protein CREG1 (192 aa).

A signal peptide spans 1–18 (MVLLAFLCAAALAALARG). Residues Asn95, Asn133, and Asn166 are each glycosylated (N-linked (GlcNAc...) asparagine).

Belongs to the CREG family.

The protein resides in the secreted. Functionally, may contribute to the transcriptional control of cell growth and differentiation. This is Protein CREG1 (CREG1) from Gallus gallus (Chicken).